The chain runs to 226 residues: ATP synthase F(0) complex subunit a (226 aa).

Helical transmembrane passes span 9–29 (FITP…FPAM), 68–88 (WALM…LGLV), 97–117 (QLSM…ITGF), 138–158 (IPML…ALAI), 164–184 (ITAG…LTSI), and 201–223 (ILEF…LYLH).

Belongs to the ATPase A chain family. As to quaternary structure, component of the ATP synthase complex composed at least of ATP5F1A/subunit alpha, ATP5F1B/subunit beta, ATP5MC1/subunit c (homooctomer), MT-ATP6/subunit a, MT-ATP8/subunit 8, ATP5ME/subunit e, ATP5MF/subunit f, ATP5MG/subunit g, ATP5MK/subunit k, ATP5MJ/subunit j, ATP5F1C/subunit gamma, ATP5F1D/subunit delta, ATP5F1E/subunit epsilon, ATP5PF/subunit F6, ATP5PB/subunit b, ATP5PD/subunit d, ATP5PO/subunit OSCP. ATP synthase complex consists of a soluble F(1) head domain (subunits alpha(3) and beta(3)) - the catalytic core - and a membrane F(0) domain - the membrane proton channel (subunits c, a, 8, e, f, g, k and j). These two domains are linked by a central stalk (subunits gamma, delta, and epsilon) rotating inside the F1 region and a stationary peripheral stalk (subunits F6, b, d, and OSCP). Interacts with DNAJC30; interaction is direct.

The protein localises to the mitochondrion inner membrane. It catalyses the reaction H(+)(in) = H(+)(out). Its function is as follows. Subunit a, of the mitochondrial membrane ATP synthase complex (F(1)F(0) ATP synthase or Complex V) that produces ATP from ADP in the presence of a proton gradient across the membrane which is generated by electron transport complexes of the respiratory chain. ATP synthase complex consist of a soluble F(1) head domain - the catalytic core - and a membrane F(1) domain - the membrane proton channel. These two domains are linked by a central stalk rotating inside the F(1) region and a stationary peripheral stalk. During catalysis, ATP synthesis in the catalytic domain of F(1) is coupled via a rotary mechanism of the central stalk subunits to proton translocation. With the subunit c (ATP5MC1), forms the proton-conducting channel in the F(0) domain, that contains two crucial half-channels (inlet and outlet) that facilitate proton movement from the mitochondrial intermembrane space (IMS) into the matrix. Protons are taken up via the inlet half-channel and released through the outlet half-channel, following a Grotthuss mechanism. This chain is ATP synthase F(0) complex subunit a, found in Dugong dugon (Dugong).